A 345-amino-acid polypeptide reads, in one-letter code: Dihydroorotase (345 aa).

The Zn(2+) site is built by H14 and H16. Substrate contacts are provided by residues 16-18 and N42; that span reads HLR. The Zn(2+) site is built by K100, H137, and H175. An N6-carboxylysine modification is found at K100. H137 serves as a coordination point for substrate. Residue L220 coordinates substrate. A Zn(2+)-binding site is contributed by D248. The active site involves D248. H252 and A264 together coordinate substrate.

This sequence belongs to the metallo-dependent hydrolases superfamily. DHOase family. Class II DHOase subfamily. In terms of assembly, homodimer. The cofactor is Zn(2+).

The enzyme catalyses (S)-dihydroorotate + H2O = N-carbamoyl-L-aspartate + H(+). Its pathway is pyrimidine metabolism; UMP biosynthesis via de novo pathway; (S)-dihydroorotate from bicarbonate: step 3/3. Catalyzes the reversible cyclization of carbamoyl aspartate to dihydroorotate. In Nitrosococcus oceani (strain ATCC 19707 / BCRC 17464 / JCM 30415 / NCIMB 11848 / C-107), this protein is Dihydroorotase.